The primary structure comprises 346 residues: Holliday junction branch migration complex subunit RuvB (346 aa).

A large ATPase domain (RuvB-L) region spans residues serine 4 to tyrosine 185. ATP is bound by residues leucine 24, arginine 25, glycine 66, lysine 69, threonine 70, threonine 71, glutamate 132–tyrosine 134, arginine 175, tyrosine 185, and arginine 222. Residue threonine 70 participates in Mg(2+) binding. The small ATPAse domain (RuvB-S) stretch occupies residues threonine 186–aspartate 256. The segment at alanine 259 to aspartate 346 is head domain (RuvB-H). Residues arginine 295, arginine 314, and arginine 319 each coordinate DNA.

The protein belongs to the RuvB family. As to quaternary structure, homohexamer. Forms an RuvA(8)-RuvB(12)-Holliday junction (HJ) complex. HJ DNA is sandwiched between 2 RuvA tetramers; dsDNA enters through RuvA and exits via RuvB. An RuvB hexamer assembles on each DNA strand where it exits the tetramer. Each RuvB hexamer is contacted by two RuvA subunits (via domain III) on 2 adjacent RuvB subunits; this complex drives branch migration. In the full resolvosome a probable DNA-RuvA(4)-RuvB(12)-RuvC(2) complex forms which resolves the HJ.

Its subcellular location is the cytoplasm. It catalyses the reaction ATP + H2O = ADP + phosphate + H(+). The RuvA-RuvB-RuvC complex processes Holliday junction (HJ) DNA during genetic recombination and DNA repair, while the RuvA-RuvB complex plays an important role in the rescue of blocked DNA replication forks via replication fork reversal (RFR). RuvA specifically binds to HJ cruciform DNA, conferring on it an open structure. The RuvB hexamer acts as an ATP-dependent pump, pulling dsDNA into and through the RuvAB complex. RuvB forms 2 homohexamers on either side of HJ DNA bound by 1 or 2 RuvA tetramers; 4 subunits per hexamer contact DNA at a time. Coordinated motions by a converter formed by DNA-disengaged RuvB subunits stimulates ATP hydrolysis and nucleotide exchange. Immobilization of the converter enables RuvB to convert the ATP-contained energy into a lever motion, pulling 2 nucleotides of DNA out of the RuvA tetramer per ATP hydrolyzed, thus driving DNA branch migration. The RuvB motors rotate together with the DNA substrate, which together with the progressing nucleotide cycle form the mechanistic basis for DNA recombination by continuous HJ branch migration. Branch migration allows RuvC to scan DNA until it finds its consensus sequence, where it cleaves and resolves cruciform DNA. This Nitrosomonas eutropha (strain DSM 101675 / C91 / Nm57) protein is Holliday junction branch migration complex subunit RuvB.